A 439-amino-acid chain; its full sequence is COBRA-like protein 7 (439 aa).

Positions 1–22 (MDVDQLILFVFVCCLSSRFADA) are cleaved as a signal peptide. 6 N-linked (GlcNAc...) asparagine glycosylation sites follow: Asn-138, Asn-181, Asn-186, Asn-232, Asn-312, and Asn-346. Asn-412 carries the GPI-anchor amidated asparagine lipid modification. A propeptide spans 413 to 439 (GGPDSRVSAAQLIASSCLLLPFIFLIM) (removed in mature form).

Belongs to the COBRA family.

The protein resides in the cell membrane. Functionally, involved in determining the orientation of cell expansion, probably by playing an important role in cellulose deposition. May act by recruiting cellulose synthesizing complexes to discrete positions on the cell surface. This chain is COBRA-like protein 7 (BC1LP1), found in Oryza sativa subsp. japonica (Rice).